The sequence spans 176 residues: Photosystem I assembly protein Ycf4 (176 aa).

Transmembrane regions (helical) follow at residues 22–42 and 57–77; these read FLWAFILFFGSLEFILVGTAS and VMTFYGISGLFISLYLLSMLF.

It belongs to the Ycf4 family.

It localises to the plastid thylakoid membrane. Its function is as follows. Seems to be required for the assembly of the photosystem I complex. The polypeptide is Photosystem I assembly protein Ycf4 (Cuscuta obtusiflora (Peruvian dodder)).